Consider the following 334-residue polypeptide: Atypical chemokine receptor 1 (334 aa).

Residues 1–61 (MGNCLYPVET…CNLLDRSSLP (61 aa)) lie on the Extracellular side of the membrane. N-linked (GlcNAc...) asparagine glycans are attached at residues Asn-16, Asn-26, and Asn-32. Cystine bridges form between Cys-49–Cys-274 and Cys-127–Cys-193. Residues 62–82 (FFMLTSVLGMLASGSILFAIL) traverse the membrane as a helical segment. Topologically, residues 83–93 (RPFFHWQICPS) are cytoplasmic. Residues 94-114 (WPILAELAVGSALFSIAVPIL) form a helical membrane-spanning segment. Residues 115–127 (APGLHSAHSTALC) are Extracellular-facing. Residues 128 to 151 (NLGYWVWYTSAFAQALLIGCYACL) form a helical membrane-spanning segment. Residues 152–164 (NPRLNIGQLRGFT) are Cytoplasmic-facing. A helical transmembrane segment spans residues 165–185 (LGLSVGLWGAAALSGLPVALA). Residues 186–205 (SDVYNGFCTFPSSRDMEALK) are Extracellular-facing. The helical transmembrane segment at 206–226 (YTHYAICFTIFTVLPLTLLAA) threads the bilayer. Residues 227–242 (KGLKIALSKGPGPWVS) are Cytoplasmic-facing. Residues 243 to 263 (VLWIWFIFWWPHGMVLIFDAL) traverse the membrane as a helical segment. Topologically, residues 264 to 285 (VRSKTVLLYTCQSQKILDAMLN) are extracellular. N-linked (GlcNAc...) asparagine glycosylation is present at Asn-285. Residues 286 to 306 (VTEALSMLHCVATPLLLALFC) form a helical membrane-spanning segment. Topologically, residues 307 to 334 (HQTTRRSLSSLSLPTRQASQMDALAGKS) are cytoplasmic.

This sequence belongs to the G-protein coupled receptor 1 family. Atypical chemokine receptor subfamily. As to expression, expressed in liver and brain.

Its subcellular location is the early endosome. The protein resides in the recycling endosome. The protein localises to the membrane. Its function is as follows. Atypical chemokine receptor that controls chemokine levels and localization via high-affinity chemokine binding that is uncoupled from classic ligand-driven signal transduction cascades, resulting instead in chemokine sequestration, degradation, or transcytosis. Also known as interceptor (internalizing receptor) or chemokine-scavenging receptor or chemokine decoy receptor. Has a promiscuous chemokine-binding profile, interacting with inflammatory chemokines of both the CXC and the CC subfamilies but not with homeostatic chemokines. Acts as a receptor for chemokines including CCL2, CCL5, CCL7, CCL11, CCL13, CCL14, CCL17, CXCL5, CXCL6, IL8/CXCL8, CXCL11, GRO, RANTES, MCP-1 and TARC. May regulate chemokine bioavailability and, consequently, leukocyte recruitment through two distinct mechanisms: when expressed in endothelial cells, it sustains the abluminal to luminal transcytosis of tissue-derived chemokines and their subsequent presentation to circulating leukocytes; when expressed in erythrocytes, serves as blood reservoir of cognate chemokines but also as a chemokine sink, buffering potential surges in plasma chemokine levels. Functionally, (Microbial infection) Acts as a receptor for the malaria parasite Plasmodium yoelii in mature erythrocytes but not reticulocytes. The polypeptide is Atypical chemokine receptor 1 (Ackr1) (Mus musculus (Mouse)).